The primary structure comprises 732 residues: Serine/threonine-protein kinase CBK1 (732 aa).

Residues Ser111–Thr240 form a disordered region. The span at Asp119–Gln159 shows a compositional bias: polar residues. The span at Asn160 to Leu171 shows a compositional bias: low complexity. Residues Pro172–Val183 show a composition bias toward polar residues. Residues Gln185–Gln221 show a composition bias toward low complexity. Over residues Ser222–Thr240 the composition is skewed to polar residues. Residues His281–Arg310 are a coiled coil. The 313-residue stretch at Phe335–Phe647 folds into the Protein kinase domain. ATP is bound by residues Ile341–Val349 and Lys364. The Proton acceptor role is filled by Asp458. The 83-residue stretch at Arg648–Asn730 folds into the AGC-kinase C-terminal domain.

It belongs to the protein kinase superfamily. STE Ser/Thr protein kinase family. COT1 subfamily. In terms of assembly, interacts with MOB2 and BCR1.

It is found in the bud neck. The protein resides in the cell tip. It carries out the reaction L-seryl-[protein] + ATP = O-phospho-L-seryl-[protein] + ADP + H(+). It catalyses the reaction L-threonyl-[protein] + ATP = O-phospho-L-threonyl-[protein] + ADP + H(+). Functionally, serine/threonine-protein kinase required for wild-type hyphal growth and transcriptional regulation of cell-wall-associated genes. Involved in the biofilm formation through phosphorylation of the master regulator of biofilm formation BCR1. The protein is Serine/threonine-protein kinase CBK1 (CBK1) of Candida albicans (strain SC5314 / ATCC MYA-2876) (Yeast).